The primary structure comprises 133 residues: Small ribosomal subunit protein uS12 (133 aa).

D89 carries the 3-methylthioaspartic acid modification. The disordered stretch occupies residues 103 to 133; the sequence is DTAGVAGRTQRRSKYGAKRPKPGQAAPAKKK. A compositionally biased stretch (basic residues) spans 111–123; it reads TQRRSKYGAKRPK. Residues 124 to 133 show a composition bias toward low complexity; the sequence is PGQAAPAKKK.

This sequence belongs to the universal ribosomal protein uS12 family. As to quaternary structure, part of the 30S ribosomal subunit. Contacts proteins S8 and S17. May interact with IF1 in the 30S initiation complex.

Functionally, with S4 and S5 plays an important role in translational accuracy. In terms of biological role, interacts with and stabilizes bases of the 16S rRNA that are involved in tRNA selection in the A site and with the mRNA backbone. Located at the interface of the 30S and 50S subunits, it traverses the body of the 30S subunit contacting proteins on the other side and probably holding the rRNA structure together. The combined cluster of proteins S8, S12 and S17 appears to hold together the shoulder and platform of the 30S subunit. The chain is Small ribosomal subunit protein uS12 from Bacteroides thetaiotaomicron (strain ATCC 29148 / DSM 2079 / JCM 5827 / CCUG 10774 / NCTC 10582 / VPI-5482 / E50).